A 431-amino-acid polypeptide reads, in one-letter code: 3-isopropylmalate dehydratase large subunit (431 aa).

[4Fe-4S] cluster-binding residues include Cys-300, Cys-360, and Cys-363.

It belongs to the aconitase/IPM isomerase family. LeuC type 2 subfamily. In terms of assembly, heterodimer of LeuC and LeuD. It depends on [4Fe-4S] cluster as a cofactor.

It catalyses the reaction (2R,3S)-3-isopropylmalate = (2S)-2-isopropylmalate. It participates in amino-acid biosynthesis; L-leucine biosynthesis; L-leucine from 3-methyl-2-oxobutanoate: step 2/4. Its function is as follows. Catalyzes the isomerization between 2-isopropylmalate and 3-isopropylmalate, via the formation of 2-isopropylmaleate. This is 3-isopropylmalate dehydratase large subunit from Sulfurihydrogenibium sp. (strain YO3AOP1).